A 60-amino-acid polypeptide reads, in one-letter code: Large ribosomal subunit protein uL30 (60 aa).

This sequence belongs to the universal ribosomal protein uL30 family. As to quaternary structure, part of the 50S ribosomal subunit.

The sequence is that of Large ribosomal subunit protein uL30 from Shewanella loihica (strain ATCC BAA-1088 / PV-4).